Consider the following 407-residue polypeptide: Phosphopentomutase (407 aa).

Residues aspartate 10, aspartate 306, histidine 311, aspartate 347, histidine 348, and histidine 359 each contribute to the Mn(2+) site.

This sequence belongs to the phosphopentomutase family. Requires Mn(2+) as cofactor.

It localises to the cytoplasm. The catalysed reaction is 2-deoxy-alpha-D-ribose 1-phosphate = 2-deoxy-D-ribose 5-phosphate. It carries out the reaction alpha-D-ribose 1-phosphate = D-ribose 5-phosphate. It participates in carbohydrate degradation; 2-deoxy-D-ribose 1-phosphate degradation; D-glyceraldehyde 3-phosphate and acetaldehyde from 2-deoxy-alpha-D-ribose 1-phosphate: step 1/2. In terms of biological role, isomerase that catalyzes the conversion of deoxy-ribose 1-phosphate (dRib-1-P) and ribose 1-phosphate (Rib-1-P) to deoxy-ribose 5-phosphate (dRib-5-P) and ribose 5-phosphate (Rib-5-P), respectively. The polypeptide is Phosphopentomutase (Salmonella paratyphi A (strain AKU_12601)).